Consider the following 704-residue polypeptide: Methionine--tRNA ligase (704 aa).

The 'HIGH' region signature appears at 17 to 27; it reads PYANGPIHLGH. 4 residues coordinate Zn(2+): Cys-148, Cys-151, Cys-161, and Cys-164. Positions 348–352 match the 'KMSKS' region motif; the sequence is KMSKS. Lys-351 contributes to the ATP binding site. The tRNA-binding domain maps to 603-704; it reads ELSKVELRVG…KDAKPGDRLK (102 aa).

Belongs to the class-I aminoacyl-tRNA synthetase family. MetG type 1 subfamily. Homodimer. Zn(2+) is required as a cofactor.

Its subcellular location is the cytoplasm. The enzyme catalyses tRNA(Met) + L-methionine + ATP = L-methionyl-tRNA(Met) + AMP + diphosphate. Is required not only for elongation of protein synthesis but also for the initiation of all mRNA translation through initiator tRNA(fMet) aminoacylation. This Leptospira borgpetersenii serovar Hardjo-bovis (strain L550) protein is Methionine--tRNA ligase.